Reading from the N-terminus, the 218-residue chain is MSFWKVAAAQYEPRKTSLTEQVAHHLEFVRAAARQQCQLLVFPSLSLLGCDYSRRALPAPPDLSLLDPLCYAATTWRMTIIAGLPVEYNDRFIRGIAVFAPWRKTPGIYHQSHGACLGRRSRTITVVDEQPQGMDMDPTCSLFTTGQCLGEPDLLASARRLQFFSHQYSIAVLMANARGNSALWDEYGRLIVRADRGSLLLVGQRSSQGWQGDIIPLR.

The CN hydrolase domain maps to 4–207; the sequence is WKVAAAQYEP…SLLLVGQRSS (204 aa).

This is an uncharacterized protein from Escherichia coli (strain K12).